The primary structure comprises 677 residues: MTQVAKKILVTCALPYANGSIHLGHMLEHIQADVWVRYQRMRGHEVNFICADDAHGTPIMLKAQQLGITPEQMIGEMSQEHQTDFAGFNISYDNYHSTHSEENRQLSELIYSRLKENGFIKNRTISQLYDPEKGMFLPDRFVKGTCPKCKSPDQYGDNCEVCGATYSPTELIEPKSVVSGATPVMRDSEHFFFDLPSFSEMLQAWTRSGALQEQVANKMQEWFESGLQQWDISRDAPYFGFEIPNAPGKYFYVWLDAPIGYMGSFKNLCDKRGDSVSFDEYWKKDSTAELYHFIGKDIVYFHSLFWPAMLEGSNFRKPTNLFVHGYVTVNGAKMSKSRGTFIKASTWLNHFDADSLRYYYTAKLSSRIDDIDLNLEDFVQRVNADIVNKVVNLASRNAGFINKRFDGVLASELADPQLYKTFTDAAEVIGEAWESREFGKAVREIMALADLANRYVDEQAPWVVAKQEGRDADLQAICSMGINLFRVLMTYLKPVLPKLTERAEAFLNTELTWDGIQQPLLGHKVNPFKALYNRIDMKQVEALVEASKEEVKATTAPVTGPLADDPIQETITFDDFAKVDLRVALIENAEFVEGSDKLLRLTLDLGGEKRNVFSGIRSAYPDPQALIGRHTIMVANLAPRKMRFGISEGMVMAAGPGGKDIFLLSPDAGAKPGHQVK.

The 'HIGH' region signature appears at 15 to 25 (PYANGSIHLGH). The Zn(2+) site is built by Cys146, Cys149, Cys159, and Cys162. The 'KMSKS' region motif lies at 333-337 (KMSKS). Lys336 contacts ATP. A tRNA-binding domain is found at 575–677 (DFAKVDLRVA…AGAKPGHQVK (103 aa)).

This sequence belongs to the class-I aminoacyl-tRNA synthetase family. MetG type 1 subfamily. Homodimer. Zn(2+) is required as a cofactor.

The protein localises to the cytoplasm. The catalysed reaction is tRNA(Met) + L-methionine + ATP = L-methionyl-tRNA(Met) + AMP + diphosphate. Functionally, is required not only for elongation of protein synthesis but also for the initiation of all mRNA translation through initiator tRNA(fMet) aminoacylation. The polypeptide is Methionine--tRNA ligase (Escherichia fergusonii (strain ATCC 35469 / DSM 13698 / CCUG 18766 / IAM 14443 / JCM 21226 / LMG 7866 / NBRC 102419 / NCTC 12128 / CDC 0568-73)).